The primary structure comprises 517 residues: GMP synthase [glutamine-hydrolyzing] (517 aa).

Positions 11-202 (KIIVLDFGSQ…AFNVCDAKAN (192 aa)) constitute a Glutamine amidotransferase type-1 domain. The Nucleophile role is filled by Cys-88. Active-site residues include His-176 and Glu-178. The GMPS ATP-PPase domain maps to 203–392 (WTMDDFIEMQ…LGIPHDLVWR (190 aa)). 230-236 (SGGVDSS) lines the ATP pocket.

In terms of assembly, homodimer.

The catalysed reaction is XMP + L-glutamine + ATP + H2O = GMP + L-glutamate + AMP + diphosphate + 2 H(+). The protein operates within purine metabolism; GMP biosynthesis; GMP from XMP (L-Gln route): step 1/1. Functionally, catalyzes the synthesis of GMP from XMP. This chain is GMP synthase [glutamine-hydrolyzing], found in Lactobacillus gasseri (strain ATCC 33323 / DSM 20243 / BCRC 14619 / CIP 102991 / JCM 1131 / KCTC 3163 / NCIMB 11718 / NCTC 13722 / AM63).